A 39-amino-acid chain; its full sequence is MVEALLSGIVLGLVPVTILGLFVTAYLQYRRGDRVTSSF.

Residues 5–25 traverse the membrane as a helical segment; it reads LLSGIVLGLVPVTILGLFVTA.

It belongs to the PetG family. In terms of assembly, the 4 large subunits of the cytochrome b6-f complex are cytochrome b6, subunit IV (17 kDa polypeptide, PetD), cytochrome f and the Rieske protein, while the 4 small subunits are PetG, PetL, PetM and PetN. The complex functions as a dimer.

It is found in the plastid. The protein resides in the chloroplast thylakoid membrane. Its function is as follows. Component of the cytochrome b6-f complex, which mediates electron transfer between photosystem II (PSII) and photosystem I (PSI), cyclic electron flow around PSI, and state transitions. PetG is required for either the stability or assembly of the cytochrome b6-f complex. The chain is Cytochrome b6-f complex subunit 5 from Pleurastrum terricola (Filamentous green alga).